We begin with the raw amino-acid sequence, 188 residues long: Trafficking protein particle complex subunit 5 (188 aa).

Residue serine 10 is modified to Phosphoserine.

It belongs to the TRAPP small subunits family. BET3 subfamily. As to quaternary structure, component of the multisubunit TRAPP (transport protein particle) complex, which includes at least TRAPPC2, TRAPPC2L, TRAPPC3, TRAPPC3L, TRAPPC4, TRAPPC5, TRAPPC8, TRAPPC9, TRAPPC10, TRAPPC11 and TRAPPC12.

It localises to the golgi apparatus. The protein localises to the cis-Golgi network. The protein resides in the endoplasmic reticulum. Functionally, may play a role in vesicular transport from endoplasmic reticulum to Golgi. This Bos taurus (Bovine) protein is Trafficking protein particle complex subunit 5 (TRAPPC5).